Consider the following 200-residue polypeptide: Small ribosomal subunit protein uS4 (200 aa).

Positions 1 to 13 (MARYRGPKQKIAR) are enriched in basic residues. The interval 1–44 (MARYRGPKQKIARRFKEPIFGPSKALERKPYPPGQHGQSRRRRE) is disordered. Residues 92 to 154 (ARLDNTVFRM…SQDLEVIQTN (63 aa)) form the S4 RNA-binding domain.

This sequence belongs to the universal ribosomal protein uS4 family. Part of the 30S ribosomal subunit. Contacts protein S5. The interaction surface between S4 and S5 is involved in control of translational fidelity.

Functionally, one of the primary rRNA binding proteins, it binds directly to 16S rRNA where it nucleates assembly of the body of the 30S subunit. Its function is as follows. With S5 and S12 plays an important role in translational accuracy. The polypeptide is Small ribosomal subunit protein uS4 (Salinibacter ruber (strain DSM 13855 / M31)).